Here is a 551-residue protein sequence, read N- to C-terminus: Tetrachloroethene reductive dehalogenase (551 aa).

Positions 1 to 39 (MGEINRRNFLKVSILGAAAAAVASASAVKGMVSPLVADA) form a signal peptide, tat-type signal. Positions 411–440 (PRKFGVREFCRLCKKCADACPAQAISHEKD) constitute a 4Fe-4S ferredoxin-type 1 domain. [4Fe-4S] cluster is bound by residues C420, C423, C426, C430, C467, C478, C481, and C485. Positions 478–496 (CSNCVAVCSWNKVETWNHD) constitute a 4Fe-4S ferredoxin-type 2 domain.

This sequence belongs to the PceA family. [4Fe-4S] cluster serves as cofactor. Corrinoid is required as a cofactor. Predicted to be exported by the Tat system. The position of the signal peptide cleavage has been experimentally proven.

Its subcellular location is the cytoplasm. It is found in the cell membrane. The protein resides in the secreted. It carries out the reaction trichloroethene + chloride + A + H(+) = tetrachloroethene + AH2. The catalysed reaction is trichloroethene + AH2 = (Z)-1,2-dichloroethene + chloride + A + H(+). Its activity is regulated as follows. PceT is required as a chaperone for prePceA maturation. In the absence or presence of exogenous vitamin B12, the intracellular corrinoid level decreases in fumarate-grown cells and the PceA precursor forms catalytically inactive, corrinoid-free multiprotein aggregates. Exogenous vitamin B12 is not incorporated into the PceA precursor, even though it affects the transposition of the pce gene cluster. Catalyzes the reductive dechlorination of tetrachloroethene (PCE) to trichloroethene (TCE) and of trichloroethene to cis-1,2-dichloroethene (DCE). Can also use various chlorinated ethanes such as tetrachloroethane, pentachloroethane and hexachloroethane. Reduced methyl viologen can act as the artificial electron donor. The polypeptide is Tetrachloroethene reductive dehalogenase (Desulfitobacterium hafniense (strain Y51)).